The primary structure comprises 218 residues: Small ribosomal subunit protein uS3c (218 aa).

The 72-residue stretch at 47-118 folds into the KH type-2 domain; sequence VQKHMRISSG…RLNIAIARVP (72 aa).

The protein belongs to the universal ribosomal protein uS3 family. Part of the 30S ribosomal subunit.

The protein resides in the plastid. It is found in the chloroplast. In Nuphar advena (Common spatterdock), this protein is Small ribosomal subunit protein uS3c (rps3).